The chain runs to 1033 residues: Probable beta-glucosidase E (1033 aa).

The disordered stretch occupies residues 1-71 (MAPPDSTHGG…RSGSYKLRPV (71 aa)). Over 1–161 (MAPPDSTHGG…PVKYARIWWR (161 aa)) the chain is Cytoplasmic. Basic and acidic residues-rich tracts occupy residues 11–20 (SFRDHLKTND) and 59–71 (DLERSGSYKLRPV). Residues 162 to 182 (TLLAVVVTLVVVVWGFLSFAV) form a helical; Signal-anchor for type II membrane protein membrane-spanning segment. At 183-1033 (SHREEPTVWP…SRDLPLMGEY (851 aa)) the chain is on the extracellular side. Residues N224, N232, and N418 are each glycosylated (N-linked (GlcNAc...) asparagine). D446 is an active-site residue. Residues N489, N528, N593, N909, N918, and N976 are each glycosylated (N-linked (GlcNAc...) asparagine).

The protein belongs to the glycosyl hydrolase 3 family.

It localises to the cell membrane. The catalysed reaction is Hydrolysis of terminal, non-reducing beta-D-glucosyl residues with release of beta-D-glucose.. Its pathway is glycan metabolism; cellulose degradation. Beta-glucosidases are one of a number of cellulolytic enzymes involved in the degradation of cellulosic biomass. Catalyzes the last step releasing glucose from the inhibitory cellobiose. The sequence is that of Probable beta-glucosidase E (bglE) from Aspergillus fumigatus (strain CBS 144.89 / FGSC A1163 / CEA10) (Neosartorya fumigata).